Consider the following 422-residue polypeptide: Elongation factor 1-alpha (422 aa).

The 217-residue stretch at K5–S221 folds into the tr-type G domain. The tract at residues G14–S21 is G1. G14 to S21 lines the GTP pocket. A Mg(2+)-binding site is contributed by S21. Residues G70–D74 are G2. A G3 region spans residues D91–G94. Residues D91 to H95 and N146 to D149 each bind GTP. The interval N146–D149 is G4. The interval S185–F187 is G5.

The protein belongs to the TRAFAC class translation factor GTPase superfamily. Classic translation factor GTPase family. EF-Tu/EF-1A subfamily.

The protein resides in the cytoplasm. It catalyses the reaction GTP + H2O = GDP + phosphate + H(+). In terms of biological role, GTP hydrolase that promotes the GTP-dependent binding of aminoacyl-tRNA to the A-site of ribosomes during protein biosynthesis. In Methanosarcina acetivorans (strain ATCC 35395 / DSM 2834 / JCM 12185 / C2A), this protein is Elongation factor 1-alpha.